The sequence spans 463 residues: Bifunctional protein GlmU (463 aa).

The pyrophosphorylase stretch occupies residues 1–233 (MSKKSTFIIL…NFEVMGINSR (233 aa)). UDP-N-acetyl-alpha-D-glucosamine is bound by residues 10–13 (LAAG), K24, Q76, 81–82 (GT), 104–106 (YGD), G143, E158, N173, and N231. D106 contributes to the Mg(2+) binding site. Residue N231 participates in Mg(2+) binding. Residues 234–254 (YELFVAEQELKLRINKEHLSK) are linker. The N-acetyltransferase stretch occupies residues 255–463 (GVQIIDIYST…LRRKQMYENR (209 aa)). 2 residues coordinate UDP-N-acetyl-alpha-D-glucosamine: R336 and K354. H366 acts as the Proton acceptor in catalysis. UDP-N-acetyl-alpha-D-glucosamine is bound by residues Y369 and N380. Acetyl-CoA is bound by residues 389-390 (NY), A426, and R443.

It in the N-terminal section; belongs to the N-acetylglucosamine-1-phosphate uridyltransferase family. This sequence in the C-terminal section; belongs to the transferase hexapeptide repeat family. In terms of assembly, homotrimer. Mg(2+) serves as cofactor.

Its subcellular location is the cytoplasm. The enzyme catalyses alpha-D-glucosamine 1-phosphate + acetyl-CoA = N-acetyl-alpha-D-glucosamine 1-phosphate + CoA + H(+). It catalyses the reaction N-acetyl-alpha-D-glucosamine 1-phosphate + UTP + H(+) = UDP-N-acetyl-alpha-D-glucosamine + diphosphate. It participates in nucleotide-sugar biosynthesis; UDP-N-acetyl-alpha-D-glucosamine biosynthesis; N-acetyl-alpha-D-glucosamine 1-phosphate from alpha-D-glucosamine 6-phosphate (route II): step 2/2. Its pathway is nucleotide-sugar biosynthesis; UDP-N-acetyl-alpha-D-glucosamine biosynthesis; UDP-N-acetyl-alpha-D-glucosamine from N-acetyl-alpha-D-glucosamine 1-phosphate: step 1/1. The protein operates within bacterial outer membrane biogenesis; LPS lipid A biosynthesis. Functionally, catalyzes the last two sequential reactions in the de novo biosynthetic pathway for UDP-N-acetylglucosamine (UDP-GlcNAc). The C-terminal domain catalyzes the transfer of acetyl group from acetyl coenzyme A to glucosamine-1-phosphate (GlcN-1-P) to produce N-acetylglucosamine-1-phosphate (GlcNAc-1-P), which is converted into UDP-GlcNAc by the transfer of uridine 5-monophosphate (from uridine 5-triphosphate), a reaction catalyzed by the N-terminal domain. The sequence is that of Bifunctional protein GlmU from Caldicellulosiruptor saccharolyticus (strain ATCC 43494 / DSM 8903 / Tp8T 6331).